Reading from the N-terminus, the 744-residue chain is Spalt-like protein sem-4 (744 aa).

Residues 6 to 32 (AEMAAVSSRRKQSKPRRMSGEGDAMMS) form a disordered region. Over residues 13–22 (SRRKQSKPRR) the composition is skewed to basic residues. C2H2-type zinc fingers lie at residues 99–124 (SSCP…LDAH), 305–327 (NQCI…YRTH), 333–355 (FKCK…MGVH), and 411–433 (QQCP…ITEH). The span at 487-497 (KNDSSPNTDTS) shows a compositional bias: polar residues. Disordered regions lie at residues 487–530 (KNDS…RQDI) and 542–562 (KLEE…PKNE). Basic and acidic residues predominate over residues 499-509 (VEEKITRDDPP). The segment covering 513 to 525 (SLSPSNSSDSSSS) has biased composition (low complexity). The span at 551–561 (QQVSTTPNPKN) shows a compositional bias: polar residues. 3 C2H2-type zinc fingers span residues 589–611 (HQCG…MRTH), 617–639 (FKCD…MGTH), and 701–723 (TVCS…LKEH). The disordered stretch occupies residues 725–744 (NNGSSAAPTPLASAATPPPS). The span at 728–744 (SSAAPTPLASAATPPPS) shows a compositional bias: low complexity.

Belongs to the sal C2H2-type zinc-finger protein family.

The protein resides in the nucleus. Its function is as follows. Transcription factor, involved in positive and negative modulation of transcription. Binds to multiple DNA sequence motifs in the regulatory elements of target genes, including homeobox selector egl-5 and LIM homeobox mec-3. Involved in cell-fate regulation in multiple lineages, including neuronal, mesodermal and vulval. Required to regulate the fate of PLM touch receptor neurons, acting via negative modulation of transcription of egl-5 and mec-3. May modulate gene expression by interacting with different transcription factors during neuronal and mesodermal cell development. Promotes the proliferative sex myoblast (SM) fate, in a cell autonomous manner, acting via the SoxC transcription factor sem-2. Involved in vulval cell-fate determination, acting by regulating expression of homeobox protein lin-39, and may link lin-39 to incoming signaling pathways. Plays a role in detoxification of reactive oxygen species (ROS), by regulating expression of transcription factor skn-1 and the phase II detoxification genes. The polypeptide is Spalt-like protein sem-4 (Caenorhabditis elegans).